We begin with the raw amino-acid sequence, 160 residues long: Ribosomal RNA large subunit methyltransferase H (160 aa).

S-adenosyl-L-methionine-binding positions include Leu77, Gly109, and 128–133; that span reads FSRLTF.

The protein belongs to the RNA methyltransferase RlmH family. Homodimer.

It is found in the cytoplasm. It carries out the reaction pseudouridine(1915) in 23S rRNA + S-adenosyl-L-methionine = N(3)-methylpseudouridine(1915) in 23S rRNA + S-adenosyl-L-homocysteine + H(+). In terms of biological role, specifically methylates the pseudouridine at position 1915 (m3Psi1915) in 23S rRNA. This chain is Ribosomal RNA large subunit methyltransferase H, found in Desulfitobacterium hafniense (strain Y51).